We begin with the raw amino-acid sequence, 222 residues long: Probable nicotinate-nucleotide adenylyltransferase (222 aa).

This sequence belongs to the NadD family.

It carries out the reaction nicotinate beta-D-ribonucleotide + ATP + H(+) = deamido-NAD(+) + diphosphate. It participates in cofactor biosynthesis; NAD(+) biosynthesis; deamido-NAD(+) from nicotinate D-ribonucleotide: step 1/1. Catalyzes the reversible adenylation of nicotinate mononucleotide (NaMN) to nicotinic acid adenine dinucleotide (NaAD). In Stenotrophomonas maltophilia (strain K279a), this protein is Probable nicotinate-nucleotide adenylyltransferase.